The primary structure comprises 352 residues: MSASGPANYEYVVARIRHRRAGLFGDDEYRKLLRMGTGEIARFMEDSTYKDAVDSLASRHRGMDLVEYALNEGLAAEFDALLSWSEGRLYDQLAKYLRKFDAWNVKTVFRGLYSHADTDAIRADLVDAGEFDAAFLDELLSADSVETVVDALSGTIFDTYLEPAFADYEDEDSLVPLENAVDRAYYENLNPSQPATAAQDSPEALYAEFLTAEIDFRNARNALRLARSGVSVDPAAYFIEGGTLFEASEMTTLVERQSDLVSRIQDSTYGDELSTALTALEESDSLIGFEHALDRALLSYSDHLSYVYPTSVCPVLAYVLAKEREVDNIRAIARGREAGMSEDEIQAELVML.

Belongs to the V-ATPase V0D/AC39 subunit family. Has multiple subunits with at least A(3), B(3), C, D, E, F, H, I and proteolipid K(x).

Its subcellular location is the cell membrane. Component of the A-type ATP synthase that produces ATP from ADP in the presence of a proton gradient across the membrane. In Halobacterium salinarum (strain ATCC 29341 / DSM 671 / R1), this protein is A-type ATP synthase subunit C.